Here is a 179-residue protein sequence, read N- to C-terminus: uncharacterized protein (179 aa).

The protein resides in the plastid. The protein localises to the cyanelle. This is an uncharacterized protein from Cyanophora paradoxa.